The following is a 955-amino-acid chain: Isoleucine--tRNA ligase (955 aa).

Positions 58–68 (IYANGDIHIGH) match the 'HIGH' region motif. Position 552 (glutamate 552) interacts with L-isoleucyl-5'-AMP. The short motif at 593–597 (KMSKS) is the 'KMSKS' region element. Position 596 (lysine 596) interacts with ATP. 4 residues coordinate Zn(2+): cysteine 918, cysteine 921, cysteine 938, and cysteine 941.

This sequence belongs to the class-I aminoacyl-tRNA synthetase family. IleS type 1 subfamily. In terms of assembly, monomer. Zn(2+) serves as cofactor.

Its subcellular location is the cytoplasm. The enzyme catalyses tRNA(Ile) + L-isoleucine + ATP = L-isoleucyl-tRNA(Ile) + AMP + diphosphate. Functionally, catalyzes the attachment of isoleucine to tRNA(Ile). As IleRS can inadvertently accommodate and process structurally similar amino acids such as valine, to avoid such errors it has two additional distinct tRNA(Ile)-dependent editing activities. One activity is designated as 'pretransfer' editing and involves the hydrolysis of activated Val-AMP. The other activity is designated 'posttransfer' editing and involves deacylation of mischarged Val-tRNA(Ile). In Vesicomyosocius okutanii subsp. Calyptogena okutanii (strain HA), this protein is Isoleucine--tRNA ligase.